We begin with the raw amino-acid sequence, 736 residues long: Centrosomal protein kizuna (736 aa).

A coiled-coil region spans residues 10–35 (HRAMKLQRNLRHCEGKRLELERELFQ). Residues 192-208 (NTSFQLSQKMPVTSVAS) show a composition bias toward polar residues. Disordered stretches follow at residues 192 to 238 (NTSF…SAQL), 279 to 305 (SFTHANPSGASPDACDYINNQTSDKHS), 323 to 348 (EDKQCLDSSSDLTVSISESEDDSYPP), and 642 to 690 (TVEE…NMST). Basic and acidic residues predominate over residues 210-219 (EDGRTHRAQI). The segment covering 328-339 (LDSSSDLTVSIS) has biased composition (polar residues). Residues 658–668 (SETSFSSSEKS) show a composition bias toward low complexity. Residues 678–690 (IQPNYMKSNNMST) show a composition bias toward polar residues.

The protein belongs to the kizuna family.

The protein resides in the cytoplasm. It localises to the cytoskeleton. The protein localises to the microtubule organizing center. Its subcellular location is the centrosome. It is found in the cilium basal body. Functionally, centrosomal protein required for establishing a robust mitotic centrosome architecture that can endure the forces that converge on the centrosomes during spindle formation. Required for stabilizing the expanded pericentriolar material around the centriole. This Xenopus laevis (African clawed frog) protein is Centrosomal protein kizuna (kiz).